Reading from the N-terminus, the 120-residue chain is Phosphoribosyl-ATP pyrophosphatase (120 aa).

The disordered stretch occupies residues 97 to 120 (REGTSGLVEKASRPAKKDSGTADS). A compositionally biased stretch (basic and acidic residues) spans 106–120 (KASRPAKKDSGTADS).

It belongs to the PRA-PH family.

The protein resides in the cytoplasm. The enzyme catalyses 1-(5-phospho-beta-D-ribosyl)-ATP + H2O = 1-(5-phospho-beta-D-ribosyl)-5'-AMP + diphosphate + H(+). Its pathway is amino-acid biosynthesis; L-histidine biosynthesis; L-histidine from 5-phospho-alpha-D-ribose 1-diphosphate: step 2/9. This chain is Phosphoribosyl-ATP pyrophosphatase, found in Rhodopirellula baltica (strain DSM 10527 / NCIMB 13988 / SH1).